The primary structure comprises 287 residues: 4-hydroxybenzoate octaprenyltransferase (287 aa).

The next 8 helical transmembrane spans lie at 21 to 39 (PIGT…WLAA), 95 to 115 (VLAL…TMNP), 116 to 136 (LTIG…FMKR), 138 to 158 (IPIP…MAYA), 161 to 181 (ANAL…WTIA), 213 to 233 (IIGA…QLSE), 234 to 251 (LGSS…LFVY), and 264 to 284 (CFQA…GVVI).

It belongs to the UbiA prenyltransferase family. Requires Mg(2+) as cofactor.

The protein resides in the cell inner membrane. It catalyses the reaction all-trans-octaprenyl diphosphate + 4-hydroxybenzoate = 4-hydroxy-3-(all-trans-octaprenyl)benzoate + diphosphate. It functions in the pathway cofactor biosynthesis; ubiquinone biosynthesis. Catalyzes the prenylation of para-hydroxybenzoate (PHB) with an all-trans polyprenyl group. Mediates the second step in the final reaction sequence of ubiquinone-8 (UQ-8) biosynthesis, which is the condensation of the polyisoprenoid side chain with PHB, generating the first membrane-bound Q intermediate 3-octaprenyl-4-hydroxybenzoate. This Aeromonas hydrophila subsp. hydrophila (strain ATCC 7966 / DSM 30187 / BCRC 13018 / CCUG 14551 / JCM 1027 / KCTC 2358 / NCIMB 9240 / NCTC 8049) protein is 4-hydroxybenzoate octaprenyltransferase.